The sequence spans 129 residues: Prefoldin subunit 6 (129 aa).

An N-acetylalanine modification is found at alanine 2. Lysine 21 is subject to N6-acetyllysine. Lysine 66 carries the N6-acetyllysine; alternate modification. Residue lysine 66 forms a Glycyl lysine isopeptide (Lys-Gly) (interchain with G-Cter in SUMO1); alternate linkage. Residue lysine 66 forms a Glycyl lysine isopeptide (Lys-Gly) (interchain with G-Cter in SUMO2); alternate linkage.

It belongs to the prefoldin subunit beta family. In terms of assembly, heterohexamer of two PFD-alpha type and four PFD-beta type subunits. Component of the PAQosome complex which is responsible for the biogenesis of several protein complexes and which consists of R2TP complex members RUVBL1, RUVBL2, RPAP3 and PIH1D1, URI complex members PFDN2, PFDN6, PDRG1, UXT and URI1 as well as ASDURF, POLR2E and DNAAF10/WDR92.

Functionally, binds specifically to cytosolic chaperonin (c-CPN) and transfers target proteins to it. Binds to nascent polypeptide chain and promotes folding in an environment in which there are many competing pathways for nonnative proteins. The polypeptide is Prefoldin subunit 6 (PFDN6) (Bos taurus (Bovine)).